We begin with the raw amino-acid sequence, 605 residues long: MHVPPTDPARSAPPASPHRRRRPKALGLTALAAAMLMAVPTTQAAFGSDVRPAAAQEVVGGGDLGPNVLVFDPSTPDIQGKVDEVFRKQESNQFGTDRYALMFKPGTYNDINAQIGFYTSIAGLGLNPDDTTFNGDVTVDAGWFDGNATQNFWRSAENLALNPVNGTNRWAVSQAAPFRRMHVKGGLNLAPDGYGWASGGYIADSKIDGEVGPYSQQQWYTRDSSVGGWGNGVWNMTFSGVEGAPAQSFPEPPYTTLETTPVSREKPFLYLDGDDYKVFVPAKRTNARGTSWGNGTPEGESLPLDQFYVVKPGATAETINAAVDQGLHLLFTPGVYHVDQPIEIDRANTVALGLGLATIIPDNGVTALKVGDVDGVKVAGLLVDAGPVNSETLVEVGSDGASGDHAANPTSLQDVFVRIGGAGPGKATTSIVVNSNDTIIDHTWVWRADHGEGVGWETNRADYGVHVKGDNVLATGLFVEHFNKYDVQWSGENGKTIFYQNEKAYDAPDQAAIQNGDIKGYAAYKVDDSVTTHEGWGMGSYCYFNVNPDIRQQHGFQAPVKPGVKFHDLLVVSLGGKGQYEHVINDIGDPTSGDTTIPSQVVSFP.

The disordered stretch occupies residues 1–23 (MHVPPTDPARSAPPASPHRRRRP). The signal sequence occupies residues 1–44 (MHVPPTDPARSAPPASPHRRRRPKALGLTALAAAMLMAVPTTQA). Substrate is bound by residues Gln-174, 194–196 (YGW), Gln-217, 446–449 (WRAD), and 480–481 (EH). The Proton donor role is filled by Glu-502. A substrate-binding site is contributed by Tyr-505.

It belongs to the glycosyl hydrolase 55 family.

Its subcellular location is the secreted. The catalysed reaction is Successive hydrolysis of beta-D-glucose units from the non-reducing ends of (1-&gt;3)-beta-D-glucans, releasing alpha-glucose.. Functionally, exo-beta-1,3-glucanase that specifically hydrolyzes laminarin and laminarioligosaccharides, producing glucose and laminaribiose as end products. This is Exo-beta-1,3-glucanase from Streptomyces sp. (strain SirexAA-E / ActE).